We begin with the raw amino-acid sequence, 440 residues long: Cysteine proteinase (440 aa).

The N-terminal stretch at 1–60 (MYSSSVVSNPNERLVNNRVENDLESSDDTLSTQAKPVSRLLTRKLLLGVVVLFFLAGVSV) is a signal peptide. The propeptide at 61-229 (VSYFLFSKYK…DEDVDLAKLT (169 aa)) is activation peptide. Residues 166 to 182 (VKGINRFSDLTEREFYK) form an involved in processing to yield active enzymes region. N206 carries N-linked (GlcNAc...) asparagine glycosylation. C250 and C291 are oxidised to a cystine. Catalysis depends on residues C253, H382, and N404.

The protein belongs to the peptidase C1 family.

The chain is Cysteine proteinase from Theileria parva (East coast fever infection agent).